The chain runs to 248 residues: 1-(5-phosphoribosyl)-5-[(5-phosphoribosylamino)methylideneamino] imidazole-4-carboxamide isomerase (248 aa).

Catalysis depends on Asp-7, which acts as the Proton acceptor. Asp-129 acts as the Proton donor in catalysis.

This sequence belongs to the HisA/HisF family.

The protein localises to the cytoplasm. The enzyme catalyses 1-(5-phospho-beta-D-ribosyl)-5-[(5-phospho-beta-D-ribosylamino)methylideneamino]imidazole-4-carboxamide = 5-[(5-phospho-1-deoxy-D-ribulos-1-ylimino)methylamino]-1-(5-phospho-beta-D-ribosyl)imidazole-4-carboxamide. Its pathway is amino-acid biosynthesis; L-histidine biosynthesis; L-histidine from 5-phospho-alpha-D-ribose 1-diphosphate: step 4/9. In Aeromonas salmonicida (strain A449), this protein is 1-(5-phosphoribosyl)-5-[(5-phosphoribosylamino)methylideneamino] imidazole-4-carboxamide isomerase.